The sequence spans 500 residues: Probable cytosol aminopeptidase (500 aa).

Mn(2+) contacts are provided by lysine 265 and aspartate 270. Lysine 277 is a catalytic residue. Residues aspartate 288, aspartate 347, and glutamate 349 each contribute to the Mn(2+) site. Arginine 351 is an active-site residue.

This sequence belongs to the peptidase M17 family. Mn(2+) serves as cofactor.

It is found in the cytoplasm. The catalysed reaction is Release of an N-terminal amino acid, Xaa-|-Yaa-, in which Xaa is preferably Leu, but may be other amino acids including Pro although not Arg or Lys, and Yaa may be Pro. Amino acid amides and methyl esters are also readily hydrolyzed, but rates on arylamides are exceedingly low.. The enzyme catalyses Release of an N-terminal amino acid, preferentially leucine, but not glutamic or aspartic acids.. Functionally, presumably involved in the processing and regular turnover of intracellular proteins. Catalyzes the removal of unsubstituted N-terminal amino acids from various peptides. The sequence is that of Probable cytosol aminopeptidase from Corynebacterium glutamicum (strain ATCC 13032 / DSM 20300 / JCM 1318 / BCRC 11384 / CCUG 27702 / LMG 3730 / NBRC 12168 / NCIMB 10025 / NRRL B-2784 / 534).